The sequence spans 192 residues: uncharacterized protein (192 aa).

One can recognise a Nudix hydrolase domain in the interval 29-160; sequence HRQAAVLIPI…PLDIYRRGDS (132 aa). The Nudix box motif lies at 67 to 89; it reads GAVDDTDASVIAAALREAEEEVA. 2 residues coordinate Mg(2+): E83 and E87.

Belongs to the Nudix hydrolase family. PCD1 subfamily. Mn(2+) serves as cofactor. Requires Mg(2+) as cofactor.

In terms of biological role, probably mediates the hydrolysis of some nucleoside diphosphate derivatives. This is an uncharacterized protein from Escherichia coli (strain SMS-3-5 / SECEC).